We begin with the raw amino-acid sequence, 321 residues long: uncharacterized protein (321 aa).

An N-terminal signal peptide occupies residues 1-18 (MKKMKKLLLLLSASFAFS).

This is an uncharacterized protein from Aquifex aeolicus (strain VF5).